Consider the following 532-residue polypeptide: FRIGIDA-like protein 4b (532 aa).

It belongs to the Frigida family. As to expression, expressed in leaves, shoot apex, flowers and during seed development.

The chain is FRIGIDA-like protein 4b (FRL4B) from Arabidopsis thaliana (Mouse-ear cress).